The sequence spans 262 residues: Dimeric xanthone biosynthesis cluster protein R11 (262 aa).

The hemerythrin-like stretch occupies residues 69 to 160; that stretch reads IADLLFYTKT…PQLFKHLNDE (92 aa).

It functions in the pathway secondary metabolite biosynthesis. In terms of biological role, part of the gene cluster that mediates the biosynthesis of the dimeric xanthones cryptosporioptides. The pathway begins with the synthesis of atrochrysone thioester by the polyketide synthase dmx-nrPKS. The atrochrysone carboxyl ACP thioesterase dmxR1 then breaks the thioester bond and releases the atrochrysone carboxylic acid from dmx-nrPKS. Atrochrysone carboxylic acid is decarboxylated by the decarboxylase dmxR15, and oxidized by the anthrone oxygenase dmxR16 to yield emodin. Emodin is then reduced to emodin hydroquinone by the oxidoreductase dmxR7. A-ring reduction by the short chain dehydrogenase dmxR18, dehydration by the scytalone dehydratase-like protein dmxR17 and probable spontaneous re-oxidation, results in overall deoxygenation to chrysophanol. Baeyer-Villiger oxidation by the Baeyer-Villiger monooxygenase (BVMO) dmxR6 then yields monodictylactone in equilibrium with monodictyphenone. In the case of the cryptosporioptides biosynthesis, monodictylactone is reduced at C-12 to an alcohol (by the short chain dehydrogenases dmxR12 or dmxR8) and hydroxylated at C-5 by dmxR9, yielding the electron-rich aromatic which could eliminate H(2)O to form the ortho-quinonemethide, followed by tautomerisation to paraquinone and complete the formal reduction to produce the 10-methylgroup. Conjugate addition of C-4a-OH to the resulting paraquinone by the monooxygenase dmxR10 then gives cyclohexadienone, which is then reduced at C-5 by the short chain dehydrogenase dmxR3 to give the dihydroxanthone. The 6,7-epoxide in the cryptosporioptides could be introduced by the cytochrome P450 monooxygenase dmxL3. The highly reducing PKS dmxL2 manufactures butyrate, which is further carboxylated by dmxL1 to form ethylmalonate. It is not yet clear whether the carboxylation occurs while the butyrate is attached to the ACP of dmxL2, but this unusual fungal metabolite could then be esterified to O-5 by the O-acetyltransferase dmxR13. Finally, dimerization performed by dmxR5 gives the observed dimers cryptosporioptides A, B and C as the final products of the pathway. The protein is Dimeric xanthone biosynthesis cluster protein R11 of Cryptosporiopsis sp. (strain 8999).